The chain runs to 283 residues: Flagellar filament 35 kDa core protein (283 aa).

Belongs to the bacterial flagellin family. In terms of assembly, the flagellum consists of two outer layers around a core that contains several antigenically related polypeptides.

It localises to the periplasmic flagellum. The protein resides in the periplasm. Its function is as follows. Component of the core of the flagella. This is Flagellar filament 35 kDa core protein (flaB) from Leptospira interrogans serogroup Icterohaemorrhagiae serovar Lai (strain 56601).